Here is a 210-residue protein sequence, read N- to C-terminus: Ribosomal RNA large subunit methyltransferase E (210 aa).

S-adenosyl-L-methionine is bound by residues glycine 61, tryptophan 63, aspartate 81, aspartate 97, and aspartate 122. Lysine 162 (proton acceptor) is an active-site residue.

It belongs to the class I-like SAM-binding methyltransferase superfamily. RNA methyltransferase RlmE family.

It is found in the cytoplasm. The enzyme catalyses uridine(2552) in 23S rRNA + S-adenosyl-L-methionine = 2'-O-methyluridine(2552) in 23S rRNA + S-adenosyl-L-homocysteine + H(+). Its function is as follows. Specifically methylates the uridine in position 2552 of 23S rRNA at the 2'-O position of the ribose in the fully assembled 50S ribosomal subunit. The polypeptide is Ribosomal RNA large subunit methyltransferase E (Xanthomonas axonopodis pv. citri (strain 306)).